Consider the following 74-residue polypeptide: Large ribosomal subunit protein uL30 (74 aa).

This sequence belongs to the universal ribosomal protein uL30 family. As to quaternary structure, part of the 50S ribosomal subunit.

The chain is Large ribosomal subunit protein uL30 from Koribacter versatilis (strain Ellin345).